Here is a 165-residue protein sequence, read N- to C-terminus: MTSIAVCPGSFDPVTLGHLDIIQRGANVFDEVIVAVLHNRNKVPLFSVEERLELLKKATEHIPNVTIDSFNGLLIDYVKQKQAKAIIRGLRAVSDFEYEMQAASINKKLGPDVETFFMMTSNQYSYLSSSIVKEVAKYEADVSDIVPPVVAEALKAKFSSSPRNK.

Ser-10 contributes to the substrate binding site. ATP contacts are provided by residues Ser-10–Phe-11 and His-18. 3 residues coordinate substrate: Lys-42, Leu-74, and Arg-88. ATP is bound by residues Gly-89 to Arg-91, Glu-99, and Tyr-124 to Ser-130.

The protein belongs to the bacterial CoaD family. In terms of assembly, homohexamer. Requires Mg(2+) as cofactor.

The protein localises to the cytoplasm. The enzyme catalyses (R)-4'-phosphopantetheine + ATP + H(+) = 3'-dephospho-CoA + diphosphate. Its pathway is cofactor biosynthesis; coenzyme A biosynthesis; CoA from (R)-pantothenate: step 4/5. Functionally, reversibly transfers an adenylyl group from ATP to 4'-phosphopantetheine, yielding dephospho-CoA (dPCoA) and pyrophosphate. The protein is Phosphopantetheine adenylyltransferase of Halalkalibacterium halodurans (strain ATCC BAA-125 / DSM 18197 / FERM 7344 / JCM 9153 / C-125) (Bacillus halodurans).